Reading from the N-terminus, the 214-residue chain is N-(5'-phosphoribosyl)anthranilate isomerase (214 aa).

This sequence belongs to the TrpF family.

The enzyme catalyses N-(5-phospho-beta-D-ribosyl)anthranilate = 1-(2-carboxyphenylamino)-1-deoxy-D-ribulose 5-phosphate. It functions in the pathway amino-acid biosynthesis; L-tryptophan biosynthesis; L-tryptophan from chorismate: step 3/5. This chain is N-(5'-phosphoribosyl)anthranilate isomerase, found in Haloarcula marismortui (strain ATCC 43049 / DSM 3752 / JCM 8966 / VKM B-1809) (Halobacterium marismortui).